The following is a 193-amino-acid chain: Potassium-transporting ATPase KdpC subunit (193 aa).

Residues 14 to 34 (ITFTFLVLCGLVYPLIVTGIA) traverse the membrane as a helical segment.

Belongs to the KdpC family. In terms of assembly, the system is composed of three essential subunits: KdpA, KdpB and KdpC.

Its subcellular location is the cell membrane. Its function is as follows. Part of the high-affinity ATP-driven potassium transport (or Kdp) system, which catalyzes the hydrolysis of ATP coupled with the electrogenic transport of potassium into the cytoplasm. This subunit acts as a catalytic chaperone that increases the ATP-binding affinity of the ATP-hydrolyzing subunit KdpB by the formation of a transient KdpB/KdpC/ATP ternary complex. This Bacillus cereus (strain G9842) protein is Potassium-transporting ATPase KdpC subunit.